We begin with the raw amino-acid sequence, 266 residues long: Translation initiation factor 2 subunit alpha (266 aa).

Positions Gly-10–Lys-81 constitute an S1 motif domain. Residues Ala-233–Glu-266 are disordered. Basic and acidic residues-rich tracts occupy residues Ser-240–Glu-249 and Phe-257–Glu-266.

It belongs to the eIF-2-alpha family. Heterotrimer composed of an alpha, a beta and a gamma chain.

EIF-2 functions in the early steps of protein synthesis by forming a ternary complex with GTP and initiator tRNA. This Haloarcula marismortui (strain ATCC 43049 / DSM 3752 / JCM 8966 / VKM B-1809) (Halobacterium marismortui) protein is Translation initiation factor 2 subunit alpha.